The following is a 527-amino-acid chain: Serine/threonine-protein kinase CHK1 (527 aa).

The 267-residue stretch at 15–281 folds into the Protein kinase domain; the sequence is VVLGDTVGQG…LKALKLHPWV (267 aa). Residues 21–29 and Lys45 contribute to the ATP site; that span reads VGQGAFACV. Residue Asp142 is the Proton acceptor of the active site.

This sequence belongs to the protein kinase superfamily. CAMK Ser/Thr protein kinase family. NIM1 subfamily.

Its subcellular location is the nucleus. The catalysed reaction is L-seryl-[protein] + ATP = O-phospho-L-seryl-[protein] + ADP + H(+). It catalyses the reaction L-threonyl-[protein] + ATP = O-phospho-L-threonyl-[protein] + ADP + H(+). In terms of biological role, serine/threonine-protein kinase which is required for checkpoint-mediated cell cycle arrest and activation of DNA repair in response to the presence of DNA damage or unreplicated DNA. May also negatively regulate cell cycle progression during unperturbed cell cycles. Controls phosphorylation and abundance of PDS1 to prevent anaphase entry. Also helps prevent mitotic exit. The protein is Serine/threonine-protein kinase CHK1 (CHK1) of Saccharomyces cerevisiae (strain ATCC 204508 / S288c) (Baker's yeast).